The following is a 554-amino-acid chain: Zinc finger protein syd-9 (554 aa).

C2H2-type zinc fingers lie at residues 20–43 (LTCP…QMFH), 65–87 (FICE…RSVH), and 93–116 (YVCK…LKHH). Disordered regions lie at residues 136–158 (KIVT…TATP), 298–319 (SPDT…PPMA), and 342–383 (ASGQ…CPSP). The segment covering 142 to 158 (NGPTTNGSTPTTSTATP) has biased composition (low complexity). Composition is skewed to polar residues over residues 351-360 (PDSTDTQKGC) and 370-379 (SDPSTSSGDS). The C2H2-type 4 zinc-finger motif lies at 387-410 (LHCKECGTLVRKSSHLPIHMTMSH). Residues 516 to 554 (RMEMSLSPIKPFQQRFSRERSSSSSVERSPSRERSRSPL) are disordered. Residues 544-554 (SPSRERSRSPL) are compositionally biased toward basic and acidic residues.

Expressed mainly in body wall muscles and ventral cord motoneurons.

The protein resides in the nucleus. The protein localises to the nucleus speckle. Functionally, plays a role in regulating synaptic function, probably by modulation of endocytosis. May be dispensable in muscle for normal locomotion. May be involved in post-transcriptional mRNA processing, in parallel with unc-75. In Caenorhabditis elegans, this protein is Zinc finger protein syd-9.